Here is a 445-residue protein sequence, read N- to C-terminus: Proline--tRNA ligase (445 aa).

It belongs to the class-II aminoacyl-tRNA synthetase family. ProS type 2 subfamily. Homodimer.

It localises to the cytoplasm. It catalyses the reaction tRNA(Pro) + L-proline + ATP = L-prolyl-tRNA(Pro) + AMP + diphosphate. Functionally, catalyzes the attachment of proline to tRNA(Pro) in a two-step reaction: proline is first activated by ATP to form Pro-AMP and then transferred to the acceptor end of tRNA(Pro). This chain is Proline--tRNA ligase, found in Cereibacter sphaeroides (strain ATCC 17029 / ATH 2.4.9) (Rhodobacter sphaeroides).